We begin with the raw amino-acid sequence, 337 residues long: DNA-directed RNA polymerase subunit alpha (337 aa).

Residues 1–233 (MVREKVTVST…DLFIPFLHIE (233 aa)) are alpha N-terminal domain (alpha-NTD). Residues 265 to 337 (KKIALKSIFI…FVIDLAKNEF (73 aa)) are alpha C-terminal domain (alpha-CTD).

It belongs to the RNA polymerase alpha chain family. In terms of assembly, in plastids the minimal PEP RNA polymerase catalytic core is composed of four subunits: alpha, beta, beta', and beta''. When a (nuclear-encoded) sigma factor is associated with the core the holoenzyme is formed, which can initiate transcription.

Its subcellular location is the plastid. It localises to the chloroplast. It catalyses the reaction RNA(n) + a ribonucleoside 5'-triphosphate = RNA(n+1) + diphosphate. DNA-dependent RNA polymerase catalyzes the transcription of DNA into RNA using the four ribonucleoside triphosphates as substrates. The sequence is that of DNA-directed RNA polymerase subunit alpha from Nicotiana tomentosiformis (Tobacco).